A 574-amino-acid chain; its full sequence is M-phase inducer phosphatase 2 (574 aa).

Disordered regions lie at residues 31 to 51 (GFGF…SSSP) and 90 to 110 (RRTS…AGLC). Ser-42 is modified (phosphoserine). A compositionally biased stretch (low complexity) spans 90–105 (RRTSECSLSSESSESS). Phosphoserine; by MELK is present on Ser-166. At Ser-246 the chain carries Phosphoserine. At Ser-319 the chain carries Phosphoserine; by MAPKAPK2 and MELK. Ser-319 is subject to Phosphoserine; by MELK and MAPK14. Positions 339-359 (DVPVLSKRRKSGTPLEEQQLE) are disordered. Ser-349 carries the post-translational modification Phosphoserine; by AURKA. Phosphoserine; by BRSK1 and MAPK14 is present on Ser-370. Positions 425-532 (IVEKFVIVDC…FFPQHPNFCE (108 aa)) constitute a Rhodanese domain. Cys-481 is a catalytic residue. Ser-557 is subject to Phosphoserine.

This sequence belongs to the MPI phosphatase family. In terms of assembly, interacts with MAPK14 and 14-3-3 proteins. Post-translationally, phosphorylated by BRSK1 in vitro. Phosphorylated by CHEK1, which inhibits the activity of this protein. Phosphorylation at Ser-349 by AURKA might locally participate in the control of the onset of mitosis. Phosphorylation by MELK at Ser-166 promotes localization to the centrosome and the spindle poles during mitosis. Phosphorylation at Ser-319 and Ser-370 by MAPK14 is required for binding to 14-3-3 proteins.

It is found in the cytoplasm. The protein localises to the cytoskeleton. It localises to the microtubule organizing center. Its subcellular location is the centrosome. The protein resides in the spindle pole. The catalysed reaction is O-phospho-L-tyrosyl-[protein] + H2O = L-tyrosyl-[protein] + phosphate. Its activity is regulated as follows. Stimulated by B-type cyclins. Tyrosine protein phosphatase which functions as a dosage-dependent inducer of mitotic progression. Directly dephosphorylates CDK1 and stimulates its kinase activity. Required for G2/M phases of the cell cycle progression and abscission during cytokinesis in a ECT2-dependent manner. The three isoforms seem to have a different level of activity. The polypeptide is M-phase inducer phosphatase 2 (Cdc25b) (Rattus norvegicus (Rat)).